A 208-amino-acid chain; its full sequence is CD209 antigen-like protein E (208 aa).

Residues 1–16 are Cytoplasmic-facing; sequence MRAPQMGSLGFLDKGH. The helical; Signal-anchor for type II membrane protein transmembrane segment at 17–37 threads the bilayer; it reads IPLVLQLLFLILFTGLLVAII. Residues 38-208 are Extracellular-facing; that stretch reads IQVSKMPSSE…KIATTCLSKW (171 aa). Disulfide bonds link Cys-77–Cys-88, Cys-105–Cys-197, and Cys-176–Cys-189. The C-type lectin domain maps to 83 to 198; the sequence is FFNGNCYFFS…CEQRKFWICK (116 aa).

The protein resides in the membrane. Functionally, putative pathogen-recognition receptor. May mediate the endocytosis of pathogens which are subsequently degraded in lysosomal compartments. The chain is CD209 antigen-like protein E (Cd209e) from Mus musculus (Mouse).